A 109-amino-acid chain; its full sequence is COX assembly mitochondrial protein 2 (109 aa).

Residues 10–54 (FHSCLDFINALDKCHQKEYYKRIFGLCNNEKDALNKCLKEASLNN) enclose the CHCH domain. 2 short sequence motifs (cx9C motif) span residues 13–23 (CLDFINALDKC) and 36–46 (CNNEKDALNKC). 2 disulfides stabilise this stretch: C13/C46 and C23/C36.

Belongs to the CMC family. Interacts with CMC1.

Its subcellular location is the mitochondrion inner membrane. The protein resides in the mitochondrion intermembrane space. In terms of biological role, required for mitochondrial cytochrome c oxidase (COX) assembly and respiration. May be involved in copper trafficking and distribution to mitochondrial COX and SOD1. In Saccharomyces cerevisiae (strain ATCC 204508 / S288c) (Baker's yeast), this protein is COX assembly mitochondrial protein 2 (CMC2).